Here is a 397-residue protein sequence, read N- to C-terminus: Elongation factor Tu (397 aa).

Residues 10 to 206 enclose the tr-type G domain; the sequence is KPHVNIGTIG…ACDDYIPEPV (197 aa). The G1 stretch occupies residues 19-26; it reads GHIDHGKT. Position 19–26 (19–26) interacts with GTP; the sequence is GHIDHGKT. T26 lines the Mg(2+) pocket. Positions 62–66 are G2; that stretch reads GITIS. The G3 stretch occupies residues 83–86; sequence DCPG. Residues 83–87 and 138–141 each bind GTP; these read DCPGH and NKAD. Positions 138–141 are G4; the sequence is NKAD. The segment at 176 to 178 is G5; it reads SAL.

It belongs to the TRAFAC class translation factor GTPase superfamily. Classic translation factor GTPase family. EF-Tu/EF-1A subfamily. Monomer.

It is found in the cytoplasm. The enzyme catalyses GTP + H2O = GDP + phosphate + H(+). Its function is as follows. GTP hydrolase that promotes the GTP-dependent binding of aminoacyl-tRNA to the A-site of ribosomes during protein biosynthesis. In Acidothermus cellulolyticus (strain ATCC 43068 / DSM 8971 / 11B), this protein is Elongation factor Tu.